A 516-amino-acid polypeptide reads, in one-letter code: Extracellular endo-inulinase inuA (516 aa).

The signal sequence occupies residues 1 to 25 (MLNPKVAYMVWMTCLGLMLPSQAQS). Substrate contacts are provided by residues 40–43 (WMNE), glutamine 59, tryptophan 67, and 99–100 (FT). Glutamate 43 is a catalytic residue. A glycan (N-linked (GlcNAc...) asparagine) is linked at asparagine 109. Position 175–176 (175–176 (RD)) interacts with substrate. Asparagine 210 carries an N-linked (GlcNAc...) asparagine glycan. Glutamate 233 contributes to the substrate binding site. 2 N-linked (GlcNAc...) asparagine glycosylation sites follow: asparagine 372 and asparagine 419.

It belongs to the glycosyl hydrolase 32 family.

It is found in the secreted. The enzyme catalyses Endohydrolysis of (2-&gt;1)-beta-D-fructosidic linkages in inulin.. Its activity is regulated as follows. Activity is stimulated by Mn(2+), Fe(2+) Ca(2+) metal ions and DTT; and inhibited by glucose, Mg(2+), Zn(2+), Cu(2+), Hg(2+), Al(3+), and Fe(3+). Functionally, endo-inulinase involved in utilization of the plant storage polymer inulin, consisting of fructooligosaccharides with a degree of polymerization (DP) value from 2 to 60. This chain is Extracellular endo-inulinase inuA (inuA), found in Aspergillus niger.